A 94-amino-acid chain; its full sequence is Small ribosomal subunit protein uS19 (94 aa).

The protein belongs to the universal ribosomal protein uS19 family.

Protein S19 forms a complex with S13 that binds strongly to the 16S ribosomal RNA. The protein is Small ribosomal subunit protein uS19 of Desulforamulus reducens (strain ATCC BAA-1160 / DSM 100696 / MI-1) (Desulfotomaculum reducens).